The sequence spans 388 residues: Succinate--CoA ligase [ADP-forming] subunit beta (388 aa).

In terms of domain architecture, ATP-grasp spans 9-244 (KEILRKFGVA…LDEEDPAEIE (236 aa)). ATP is bound by residues K46, 53-55 (GRG), E99, A102, and E107. Residues N199 and D213 each contribute to the Mg(2+) site. Substrate-binding positions include N264 and 321–323 (GIM).

This sequence belongs to the succinate/malate CoA ligase beta subunit family. Heterotetramer of two alpha and two beta subunits. It depends on Mg(2+) as a cofactor.

The catalysed reaction is succinate + ATP + CoA = succinyl-CoA + ADP + phosphate. The enzyme catalyses GTP + succinate + CoA = succinyl-CoA + GDP + phosphate. Its pathway is carbohydrate metabolism; tricarboxylic acid cycle; succinate from succinyl-CoA (ligase route): step 1/1. Its function is as follows. Succinyl-CoA synthetase functions in the citric acid cycle (TCA), coupling the hydrolysis of succinyl-CoA to the synthesis of either ATP or GTP and thus represents the only step of substrate-level phosphorylation in the TCA. The beta subunit provides nucleotide specificity of the enzyme and binds the substrate succinate, while the binding sites for coenzyme A and phosphate are found in the alpha subunit. This is Succinate--CoA ligase [ADP-forming] subunit beta from Burkholderia ambifaria (strain MC40-6).